An 84-amino-acid polypeptide reads, in one-letter code: Small ribosomal subunit protein uS17 (84 aa).

It belongs to the universal ribosomal protein uS17 family. As to quaternary structure, part of the 30S ribosomal subunit.

Its function is as follows. One of the primary rRNA binding proteins, it binds specifically to the 5'-end of 16S ribosomal RNA. This is Small ribosomal subunit protein uS17 from Borreliella afzelii (strain PKo) (Borrelia afzelii).